The primary structure comprises 148 residues: MSDSVEIYTDGACKGNPGPGGWGVLMVFKGVEKELWGGERETTNNRMELMAAIEGLKALKRECEVVLTTDSQYVMKGINEWMVNWKKRGWKTAAKEPVKNADLWMALDEQVNRHKVTWKWVRGHIGHPGNERADQLANRGVDEVRAQR.

In terms of domain architecture, RNase H type-1 spans 1–142 (MSDSVEIYTD…ADQLANRGVD (142 aa)). 4 residues coordinate Mg(2+): D10, E48, D70, and D134. The tract at residues 129–148 (GNERADQLANRGVDEVRAQR) is disordered.

This sequence belongs to the RNase H family. Monomer. It depends on Mg(2+) as a cofactor.

The protein localises to the cytoplasm. The enzyme catalyses Endonucleolytic cleavage to 5'-phosphomonoester.. In terms of biological role, endonuclease that specifically degrades the RNA of RNA-DNA hybrids. The protein is Ribonuclease H of Pseudomonas entomophila (strain L48).